Here is a 265-residue protein sequence, read N- to C-terminus: Isoprenyl transferase 1 (265 aa).

Residue Asp-43 is part of the active site. A Mg(2+)-binding site is contributed by Asp-43. Substrate contacts are provided by residues 44–47 (GNRR), Trp-48, His-61, and 89–91 (STE). The Proton acceptor role is filled by Asn-92. Substrate-binding positions include Arg-95, Arg-214, and 220–222 (RLS). Mg(2+) is bound at residue Glu-233.

The protein belongs to the UPP synthase family. In terms of assembly, homodimer. Mg(2+) serves as cofactor.

Catalyzes the condensation of isopentenyl diphosphate (IPP) with allylic pyrophosphates generating different type of terpenoids. This is Isoprenyl transferase 1 from Corynebacterium diphtheriae (strain ATCC 700971 / NCTC 13129 / Biotype gravis).